We begin with the raw amino-acid sequence, 919 residues long: Probable disease resistance protein At4g27220 (919 aa).

Coiled-coil stretches lie at residues 1–30 (MFRS…LKRS) and 74–95 (VEIL…KKIS). The NB-ARC domain occupies 121 to 399 (MLDKLKDCLK…AEGLLDGQHH (279 aa)). 141-148 (GMGGVGKT) is a binding site for ATP. LRR repeat units lie at residues 447–468 (GEGF…QDKF), 469–492 (VSSV…VIEG), 494–516 (ETLV…FLQA), 519–540 (NLRI…FSNL), 542–564 (SLRS…ESLV), 565–587 (KLQF…EALS), 588–610 (SLRY…TILQ), and 611–635 (LSSL…EREG).

This sequence belongs to the disease resistance NB-LRR family.

Its function is as follows. Probable disease resistance protein. The protein is Probable disease resistance protein At4g27220 of Arabidopsis thaliana (Mouse-ear cress).